Consider the following 61-residue polypeptide: UPF0181 protein KPN78578_22920 (61 aa).

Belongs to the UPF0181 family.

In Klebsiella pneumoniae subsp. pneumoniae (strain ATCC 700721 / MGH 78578), this protein is UPF0181 protein KPN78578_22920.